The primary structure comprises 290 residues: MEWSLTQNKLLAYHRLMRTDKPIGALLLLWPTLWALWVASPGVPPLWILAVFVAGVWLMRAAGCVVNDYADRKFDGHVKRTAHRPLPSGDVTEKEARNLFVILVLLSFLLVLTLNVKTILLSVAALALAWMYPFMKRYTHLPQVVLGAAFGWSIPMAFCAVSESLPLSCWLMFFANICWAVAYDTEYAMVDRDDDVKIGVKSTAILFGRHDKLIIGLLQIAVLALLGTVGWLNGLGAFYYAGLAGAGALFIWQQKIIAGRDRDACFRAFLNNNYVGLLVFIGLALSYLKF.

A run of 6 helical transmembrane segments spans residues 33–53, 99–119, 141–161, 213–233, 234–254, and 268–288; these read LWALWVASPGVPPLWILAVFV, LFVILVLLSFLLVLTLNVKTI, LPQVVLGAAFGWSIPMAFCAV, LIIGLLQIAVLALLGTVGWLN, GLGAFYYAGLAGAGALFIWQQ, and AFLNNNYVGLLVFIGLALSYL.

This sequence belongs to the UbiA prenyltransferase family. Mg(2+) serves as cofactor.

Its subcellular location is the cell inner membrane. It carries out the reaction all-trans-octaprenyl diphosphate + 4-hydroxybenzoate = 4-hydroxy-3-(all-trans-octaprenyl)benzoate + diphosphate. The protein operates within cofactor biosynthesis; ubiquinone biosynthesis. Its function is as follows. Catalyzes the prenylation of para-hydroxybenzoate (PHB) with an all-trans polyprenyl group. Mediates the second step in the final reaction sequence of ubiquinone-8 (UQ-8) biosynthesis, which is the condensation of the polyisoprenoid side chain with PHB, generating the first membrane-bound Q intermediate 3-octaprenyl-4-hydroxybenzoate. The sequence is that of 4-hydroxybenzoate octaprenyltransferase from Cronobacter sakazakii (strain ATCC BAA-894) (Enterobacter sakazakii).